We begin with the raw amino-acid sequence, 691 residues long: Elongation factor G (691 aa).

Residues 8–282 (ERVRNIGIAA…AVVDYLPAPI (275 aa)) enclose the tr-type G domain. Residues 17 to 24 (AHIDAGKT), 81 to 85 (DTPGH), and 135 to 138 (NKMD) each bind GTP.

The protein belongs to the TRAFAC class translation factor GTPase superfamily. Classic translation factor GTPase family. EF-G/EF-2 subfamily.

The protein localises to the cytoplasm. Its function is as follows. Catalyzes the GTP-dependent ribosomal translocation step during translation elongation. During this step, the ribosome changes from the pre-translocational (PRE) to the post-translocational (POST) state as the newly formed A-site-bound peptidyl-tRNA and P-site-bound deacylated tRNA move to the P and E sites, respectively. Catalyzes the coordinated movement of the two tRNA molecules, the mRNA and conformational changes in the ribosome. The chain is Elongation factor G from Synechococcus sp. (strain WH7803).